The primary structure comprises 392 residues: Caveolae-associated protein 1 (392 aa).

Met-1 is modified (N-acetylmethionine). Positions 1-10 are enriched in basic and acidic residues; it reads MEDVTLHIVE. Residues 1-45 form a disordered region; that stretch reads MEDVTLHIVERPYSGFPDASSEGPEPTQGEARATEEPSGTGSDEL. The tract at residues 1–100 is required for homotrimerization and for interaction with CAVIN2 and CAVIN3; that stretch reads MEDVTLHIVE…IQGELSKLGK (100 aa). Ser-21 and Ser-38 each carry phosphoserine. Thr-40 is modified (phosphothreonine). 2 positions are modified to phosphoserine: Ser-42 and Ser-48. Positions 54–64 are nuclear export signal; that stretch reads VLVLSLLDKII. The leucine-zipper 1 stretch occupies residues 55–77; sequence LVLSLLDKIIGAVDQIQLTQAQL. Lys-118 participates in a covalent cross-link: Glycyl lysine isopeptide (Lys-Gly) (interchain with G-Cter in SUMO2). The residue at position 120 (Ser-120) is a Phosphoserine. A Glycyl lysine isopeptide (Lys-Gly) (interchain with G-Cter in SUMO2) cross-link involves residue Lys-124. The nuclear localization signal stretch occupies residues 138–154; the sequence is KKLEVNEAELLRRRNFK. Phosphotyrosine is present on Tyr-158. A Glycyl lysine isopeptide (Lys-Gly) (interchain with G-Cter in SUMO1); alternate cross-link involves residue Lys-163. Lys-163 is covalently cross-linked (Glycyl lysine isopeptide (Lys-Gly) (interchain with G-Cter in SUMO2); alternate). Lys-167 is covalently cross-linked (Glycyl lysine isopeptide (Lys-Gly) (interchain with G-Cter in SUMO2)). The interval 168–188 is leucine-zipper 2; that stretch reads LSVSKSLKESEALPEKEGDEL. 2 positions are modified to phosphoserine: Ser-169 and Ser-171. A Glycyl lysine isopeptide (Lys-Gly) (interchain with G-Cter in SUMO2) cross-link involves residue Lys-172. Phosphoserine occurs at positions 173 and 177. Over residues 173–183 the composition is skewed to basic and acidic residues; that stretch reads SLKESEALPEK. Residues 173–197 are disordered; the sequence is SLKESEALPEKEGDELGEGERPEDD. A compositionally biased stretch (acidic residues) spans 184–197; that stretch reads EGDELGEGERPEDD. The residue at position 198 (Thr-198) is a Phosphothreonine. Residues 201–284 are a coiled coil; the sequence is IELSSDEAVE…RMNKLGTRLV (84 aa). Phosphoserine is present on residues Ser-204 and Ser-205. A nuclear localization signal region spans residues 235-251; it reads KKAFSKEKMEKTKVRTR. A leucine-zipper 3 region spans residues 259–299; sequence LKTKENLEKTRHTLEKRMNKLGTRLVPVERREKLKTSRDKL. Residue Ser-302 is modified to Phosphoserine. Phosphothreonine is present on Thr-304. Position 310 is a phosphotyrosine (Tyr-310). Residue Lys-328 forms a Glycyl lysine isopeptide (Lys-Gly) (interchain with G-Cter in SUMO2) linkage. The tract at residues 347 to 367 is disordered; that stretch reads GPEDDEVGAERGEATDLLRGS. Ser-367, Ser-368, Ser-381, Ser-389, and Ser-391 each carry phosphoserine.

This sequence belongs to the CAVIN family. In terms of assembly, component of the CAVIN complex composed of CAVIN1, CAVIN2, CAVIN3 and CAVIN4. Homotrimer. Interacts with LIPE in the adipocyte cytoplasm. Interacts with RNA polymerase I subunit POLR1A/RPA1. Interacts with TTF1. Binds the 3' end of pre-rRNA. Interacts with transcription factor ZNF148. Interacts with CAV1, CAVIN2 and CAVIN3. Interacts with CAVIN4. Post-translationally, phosphorylated. Present in active and inactive forms. Changes in phosphorylation pattern may alter activity. Phosphorylation at Tyr-158 is essential for its function in the regulation of the ribosomal transcriptional activity. Monoubiquitinated. As to expression, expressed in the heart, stomach, adipose tissue and lung (at protein level). Expressed in testis, kidney, muscle, liver, spleen and brain.

Its subcellular location is the membrane. It is found in the caveola. The protein resides in the cell membrane. The protein localises to the microsome. It localises to the endoplasmic reticulum. Its subcellular location is the cytoplasm. It is found in the cytosol. The protein resides in the mitochondrion. The protein localises to the nucleus. Functionally, plays an important role in caveolae formation and organization. Essential for the formation of caveolae in all tissues. Core component of the CAVIN complex which is essential for recruitment of the complex to the caveolae in presence of calveolin-1 (CAV1). Essential for normal oligomerization of CAV1. Promotes ribosomal transcriptional activity in response to metabolic challenges in the adipocytes and plays an important role in the formation of the ribosomal transcriptional loop. Dissociates transcription complexes paused by DNA-bound TTF1, thereby releasing both RNA polymerase I and pre-RNA from the template. The caveolae biogenesis pathway is required for the secretion of proteins such as GASK1A. The polypeptide is Caveolae-associated protein 1 (Cavin1) (Mus musculus (Mouse)).